The chain runs to 216 residues: Uracil phosphoribosyltransferase (216 aa).

Residues Arg-32, Arg-41, 75 to 78, and Lys-77 contribute to the GTP site; that span reads MGKI. Residue Ser-82 is modified to Phosphoserine. Arg-85 serves as a coordination point for 5-phospho-alpha-D-ribose 1-diphosphate. Arg-102 contributes to the GTP binding site. A 5-phospho-alpha-D-ribose 1-diphosphate-binding site is contributed by Arg-110. Arg-131 serves as a coordination point for GTP. 5-phospho-alpha-D-ribose 1-diphosphate is bound by residues Asp-137 and 137-145; that span reads DPMLATGGS. D-ribose 5-phosphate is bound at residue Tyr-201. Residues Leu-202 and 207–209 contribute to the uracil site; that span reads GDF. Residue Asp-208 coordinates 5-phospho-alpha-D-ribose 1-diphosphate.

Belongs to the UPRTase family. It depends on Mg(2+) as a cofactor.

It catalyses the reaction UMP + diphosphate = 5-phospho-alpha-D-ribose 1-diphosphate + uracil. The protein operates within pyrimidine metabolism; UMP biosynthesis via salvage pathway; UMP from uracil: step 1/1. With respect to regulation, allosterically activated by GTP. Functionally, catalyzes the conversion of uracil and 5-phospho-alpha-D-ribose 1-diphosphate (PRPP) to UMP and diphosphate in the pyrimidine salvage pathway. This chain is Uracil phosphoribosyltransferase (FUR1), found in Saccharomyces cerevisiae (strain ATCC 204508 / S288c) (Baker's yeast).